Consider the following 259-residue polypeptide: MRDVQSERDERNVPLKHVGIKNLKYPVVVLDKKNKNQHTIAEINMYVDLPKDFRGTHMSRFLEVLNKFHLKIDPKNIKAILDDLKKTLKAQSASIEIMFPYFLQKKAPVTKIESYMEYKCGFKAYDTNEECEFYIVVEVPIQTLCPCSKEISKYNAHNQRALARIEVETSELIWFEDLIELAESSASVPLFTLLKRPDEKYVTEKAYENPKFVEDVARDIALSLKENKKIRWFKVEVESFESIHNHNAYACVNSDTMEV.

This sequence belongs to the GTP cyclohydrolase IV family.

It carries out the reaction GTP + H2O = 7,8-dihydroneopterin 3'-triphosphate + formate + H(+). Its pathway is cofactor biosynthesis; 7,8-dihydroneopterin triphosphate biosynthesis; 7,8-dihydroneopterin triphosphate from GTP: step 1/1. Converts GTP to 7,8-dihydroneopterin triphosphate. The polypeptide is GTP cyclohydrolase FolE2 (Thermosipho africanus (strain TCF52B)).